The chain runs to 223 residues: Deoxyribose-phosphate aldolase (223 aa).

Aspartate 92 functions as the Proton donor/acceptor in the catalytic mechanism. Residue lysine 154 is the Schiff-base intermediate with acetaldehyde of the active site. The Proton donor/acceptor role is filled by lysine 182.

The protein belongs to the DeoC/FbaB aldolase family. DeoC type 1 subfamily.

Its subcellular location is the cytoplasm. The catalysed reaction is 2-deoxy-D-ribose 5-phosphate = D-glyceraldehyde 3-phosphate + acetaldehyde. It participates in carbohydrate degradation; 2-deoxy-D-ribose 1-phosphate degradation; D-glyceraldehyde 3-phosphate and acetaldehyde from 2-deoxy-alpha-D-ribose 1-phosphate: step 2/2. Its function is as follows. Catalyzes a reversible aldol reaction between acetaldehyde and D-glyceraldehyde 3-phosphate to generate 2-deoxy-D-ribose 5-phosphate. The sequence is that of Deoxyribose-phosphate aldolase from Haemophilus influenzae (strain 86-028NP).